Reading from the N-terminus, the 832-residue chain is Translation initiation factor IF-2 (832 aa).

A disordered region spans residues 1–244; sequence MSDTDGKKTL…KAMGGSQERE (244 aa). Polar residues predominate over residues 18–27; it reads TGQVKQSFSH. Basic and acidic residues predominate over residues 81–141; the sequence is KANESEEAER…EARKKAEADA (61 aa). Residues 142 to 171 are compositionally biased toward low complexity; it reads SSKPAAARSKADDPATMDPAAAQAAEARGA. Composition is skewed to basic and acidic residues over residues 178–201 and 227–244; these read PRKERTADRAQPRKEQKGKGDDRR and RKQERERRKAMGGSQERE. The region spanning 329-497 is the tr-type G domain; the sequence is PRPPVITVMG…SIALQAEILE (169 aa). The segment at 338 to 345 is G1; sequence GHVDHGKT. Residue 338–345 participates in GTP binding; sequence GHVDHGKT. Residues 363-367 form a G2 region; sequence GITQH. A G3 region spans residues 385 to 388; the sequence is DTPG. GTP is bound by residues 385–389 and 439–442; these read DTPGH and NKID. The interval 439 to 442 is G4; it reads NKID. The interval 475 to 477 is G5; the sequence is SAI.

The protein belongs to the TRAFAC class translation factor GTPase superfamily. Classic translation factor GTPase family. IF-2 subfamily.

It is found in the cytoplasm. One of the essential components for the initiation of protein synthesis. Protects formylmethionyl-tRNA from spontaneous hydrolysis and promotes its binding to the 30S ribosomal subunits. Also involved in the hydrolysis of GTP during the formation of the 70S ribosomal complex. This is Translation initiation factor IF-2 from Dinoroseobacter shibae (strain DSM 16493 / NCIMB 14021 / DFL 12).